A 244-amino-acid chain; its full sequence is HTH-type transcriptional regulator Cmr (244 aa).

41 to 160 (GSAPLHRDDV…RRWLSSVAQR (120 aa)) contacts a nucleoside 3',5'-cyclic phosphate. Positions 174–237 (RPLPAQVAQL…YAVIEITDQH (64 aa)) constitute an HTH crp-type domain. Positions 197 to 216 (QRTLAAMLGAQRPSINKILK) form a DNA-binding region, H-T-H motif.

In terms of biological role, positively regulates the expression of at least groEL2. This Mycobacterium tuberculosis (strain CDC 1551 / Oshkosh) protein is HTH-type transcriptional regulator Cmr (cmr).